The following is a 550-amino-acid chain: Chaperonin GroEL (550 aa).

ATP is bound by residues 30–33 (TLGP), Lys51, 87–91 (DGTTT), Gly415, 479–481 (NAA), and Asp495.

Belongs to the chaperonin (HSP60) family. Forms a cylinder of 14 subunits composed of two heptameric rings stacked back-to-back. Interacts with the co-chaperonin GroES.

It localises to the cytoplasm. The enzyme catalyses ATP + H2O + a folded polypeptide = ADP + phosphate + an unfolded polypeptide.. Functionally, together with its co-chaperonin GroES, plays an essential role in assisting protein folding. The GroEL-GroES system forms a nano-cage that allows encapsulation of the non-native substrate proteins and provides a physical environment optimized to promote and accelerate protein folding. This Aromatoleum aromaticum (strain DSM 19018 / LMG 30748 / EbN1) (Azoarcus sp. (strain EbN1)) protein is Chaperonin GroEL.